The sequence spans 579 residues: Golvesin (579 aa).

The required for targeting to the plasma membrane stretch occupies residues Met-1–Asn-75. Residues Met-1–Gly-79 are disordered. Over Met-1–Lys-94 the chain is Lumenal. The segment covering Ile-11–Asn-77 has biased composition (low complexity). A helical; Signal-anchor for type III membrane protein membrane pass occupies residues Ile-95 to Ser-115. The segment at Ile-95 to Phe-118 is required for membrane targeting. Over Leu-116 to Pro-578 the chain is Cytoplasmic. The interval Trp-559 to Glu-579 is required for transfer to endosomes and contractile vacuoles; the protein is trapped in the Golgi.

It localises to the contractile vacuole membrane. It is found in the endosome membrane. The protein localises to the golgi apparatus membrane. This is Golvesin (gol) from Dictyostelium discoideum (Social amoeba).